A 420-amino-acid chain; its full sequence is UDP-glucuronic acid decarboxylase 1 (420 aa).

At M1 the chain carries N-acetylmethionine. Topologically, residues 1-19 (MVSKGLLRLVSSVNRRRMK) are cytoplasmic. The chain crosses the membrane as a helical; Signal-anchor for type II membrane protein span at residues 20–40 (LLLGIALFAYAASVWGNFVNM). Residues 41–420 (RSIQENGELK…RVKKGRTRHS (380 aa)) lie on the Lumenal side of the membrane. T94 carries the post-translational modification Phosphothreonine. NAD(+) is bound by residues G98, F99, V100, D119, N120, F122, T123, G124, D144, and V145. The UDP-alpha-D-glucuronate site is built by L149 and Y150. NAD(+) is bound by residues L159 and S161. A UDP-alpha-D-glucuronate-binding site is contributed by K177. T178 contacts NAD(+). Residues N185, G188, K191, and R192 each contribute to the UDP-alpha-D-glucuronate site. Positions 200, 231, and 235 each coordinate NAD(+). Y231 serves as the catalytic Proton acceptor. UDP-alpha-D-glucuronate is bound by residues Y245, Q248, and E249. NAD(+) contacts are provided by T261, H267, and R272. N316 is a glycosylation site (N-linked (GlcNAc...) asparagine).

Belongs to the NAD(P)-dependent epimerase/dehydratase family. UDP-glucuronic acid decarboxylase subfamily. Homodimer and homotetramer. Interacts with AKT1. NAD(+) serves as cofactor.

The protein localises to the golgi apparatus. It localises to the golgi stack membrane. It catalyses the reaction UDP-alpha-D-glucuronate + H(+) = UDP-alpha-D-xylose + CO2. It functions in the pathway nucleotide-sugar biosynthesis; UDP-alpha-D-xylose biosynthesis; UDP-alpha-D-xylose from UDP-alpha-D-glucuronate: step 1/1. In terms of biological role, catalyzes the NAD-dependent decarboxylation of UDP-glucuronic acid to UDP-xylose. Necessary for the biosynthesis of the core tetrasaccharide in glycosaminoglycan biosynthesis. The chain is UDP-glucuronic acid decarboxylase 1 (Uxs1) from Mus musculus (Mouse).